Here is a 262-residue protein sequence, read N- to C-terminus: Tryptophan synthase alpha chain (262 aa).

Active-site proton acceptor residues include Glu48 and Asp59.

It belongs to the TrpA family. As to quaternary structure, tetramer of two alpha and two beta chains.

It carries out the reaction (1S,2R)-1-C-(indol-3-yl)glycerol 3-phosphate + L-serine = D-glyceraldehyde 3-phosphate + L-tryptophan + H2O. It participates in amino-acid biosynthesis; L-tryptophan biosynthesis; L-tryptophan from chorismate: step 5/5. The alpha subunit is responsible for the aldol cleavage of indoleglycerol phosphate to indole and glyceraldehyde 3-phosphate. The sequence is that of Tryptophan synthase alpha chain from Helicobacter pylori (strain P12).